The primary structure comprises 356 residues: Tetraacyldisaccharide 4'-kinase (356 aa).

An ATP-binding site is contributed by 51–58; that stretch reads GWGGSGKT.

This sequence belongs to the LpxK family.

The catalysed reaction is a lipid A disaccharide + ATP = a lipid IVA + ADP + H(+). Its pathway is glycolipid biosynthesis; lipid IV(A) biosynthesis; lipid IV(A) from (3R)-3-hydroxytetradecanoyl-[acyl-carrier-protein] and UDP-N-acetyl-alpha-D-glucosamine: step 6/6. In terms of biological role, transfers the gamma-phosphate of ATP to the 4'-position of a tetraacyldisaccharide 1-phosphate intermediate (termed DS-1-P) to form tetraacyldisaccharide 1,4'-bis-phosphate (lipid IVA). This chain is Tetraacyldisaccharide 4'-kinase, found in Oleidesulfovibrio alaskensis (strain ATCC BAA-1058 / DSM 17464 / G20) (Desulfovibrio alaskensis).